Here is a 427-residue protein sequence, read N- to C-terminus: DEAD-box ATP-dependent RNA helicase 56 (427 aa).

The tract at residues 1 to 30 (MGDARDNEAYEEELLDYEEEDEKVPDSGNK) is disordered. The span at 9–23 (AYEEELLDYEEEDEK) shows a compositional bias: acidic residues. The Q motif motif lies at 46-74 (SGFRDFLLKPELLRAIVDSGFEHPSEVQH). In terms of domain architecture, Helicase ATP-binding spans 77 to 250 (IPQAILGMDV…KKFMQDPMEI (174 aa)). Residue 90–97 (AKSGMGKT) coordinates ATP. The DECD box signature appears at 197-200 (DECD). The Helicase C-terminal domain occupies 278 to 423 (KLNDLLDALD…ELPEQIDTST (146 aa)).

This sequence belongs to the DEAD box helicase family. DECD subfamily. As to quaternary structure, interacts with ALY2 and MOS11.

The protein localises to the nucleus. The catalysed reaction is ATP + H2O = ADP + phosphate + H(+). Its function is as follows. ATP-dependent RNA helicase involved in pre-mRNA splicing. Required for the export of mRNA out of the nucleus. In addition to ssRNA and dsRNA, binds dsDNA, but not ssDNA. In Arabidopsis thaliana (Mouse-ear cress), this protein is DEAD-box ATP-dependent RNA helicase 56 (RH56).